We begin with the raw amino-acid sequence, 622 residues long: Protein lev-9 (622 aa).

An N-terminal signal peptide occupies residues 1–16; that stretch reads MRFLLLLAISITYASA. One can recognise a WAP; atypical domain in the interval 17–61; sequence LSCPEVTLSQRPKHCKKECIADEDCKRNKRCMCDGECGLSCVNPI. 19 disulfide bridges follow: Cys19-Cys49, Cys35-Cys47, Cys41-Cys57, Cys64-Cys105, Cys91-Cys118, Cys124-Cys171, Cys154-Cys188, Cys193-Cys233, Cys219-Cys246, Cys251-Cys291, Cys277-Cys304, Cys309-Cys349, Cys335-Cys362, Cys366-Cys409, Cys395-Cys420, Cys425-Cys467, Cys452-Cys481, Cys486-Cys543, and Cys529-Cys556. 8 Sushi domains span residues 62-120, 122-190, 191-248, 249-306, 307-364, 365-422, 423-483, and 484-558; these read AMCH…VCRL, LKCG…RCKA, RACP…NCKA, TECS…RCEE, IRCS…RCLA, SCRV…VCSP, LSCH…KCLP, and SWCE…KCVS. Residue Asn411 is glycosylated (N-linked (GlcNAc...) asparagine). Residues 576 to 622 constitute a propeptide that is removed on maturation; the sequence is SLPGRAVREYVDDELSTHRQHSGKCGIVSGKLERMIMQHSDNGVSVC.

In terms of processing, proteolytic processing of the C-terminus is required for clustering activity but not for secretion nor traffic.

The protein resides in the synapse. The protein localises to the secreted. Functionally, scaffolding protein that is necessary to cluster acetylcholine receptors at neuromuscular junctions. This chain is Protein lev-9 (lev-9), found in Caenorhabditis elegans.